The following is a 418-amino-acid chain: Tyrosine--tRNA ligase 1 (418 aa).

Tyr-34 serves as a coordination point for L-tyrosine. Positions 39–48 (PTADSLHIGH) match the 'HIGH' region motif. Tyr-169 and Gln-173 together coordinate L-tyrosine. The short motif at 230 to 234 (KFGKT) is the 'KMSKS' region element. Residue Lys-233 coordinates ATP. Residues 352 to 418 (TVLIDLLVES…GKKKYFLIRY (67 aa)) enclose the S4 RNA-binding domain.

Belongs to the class-I aminoacyl-tRNA synthetase family. TyrS type 1 subfamily. In terms of assembly, homodimer.

It is found in the cytoplasm. It catalyses the reaction tRNA(Tyr) + L-tyrosine + ATP = L-tyrosyl-tRNA(Tyr) + AMP + diphosphate + H(+). Functionally, catalyzes the attachment of tyrosine to tRNA(Tyr) in a two-step reaction: tyrosine is first activated by ATP to form Tyr-AMP and then transferred to the acceptor end of tRNA(Tyr). This is Tyrosine--tRNA ligase 1 from Bacillus cereus (strain ATCC 10987 / NRS 248).